The chain runs to 206 residues: Glycerol-3-phosphate acyltransferase (206 aa).

A run of 5 helical transmembrane segments spans residues 3–23 (LGWLLVIGSYLLGSVSFSYII), 51–71 (VGPAVTVLLLDILKGVIAVVV), 83–103 (FAAAAGIAAIIGHNWPIYYGF), 113–133 (IGVLASLVPLAAVLAGVIAIG), and 162–182 (WFGYPVAYIYLTIIVAILSMW).

It belongs to the PlsY family. As to quaternary structure, probably interacts with PlsX.

The protein resides in the cell membrane. It catalyses the reaction an acyl phosphate + sn-glycerol 3-phosphate = a 1-acyl-sn-glycero-3-phosphate + phosphate. The protein operates within lipid metabolism; phospholipid metabolism. Catalyzes the transfer of an acyl group from acyl-phosphate (acyl-PO(4)) to glycerol-3-phosphate (G3P) to form lysophosphatidic acid (LPA). This enzyme utilizes acyl-phosphate as fatty acyl donor, but not acyl-CoA or acyl-ACP. The chain is Glycerol-3-phosphate acyltransferase from Halalkalibacterium halodurans (strain ATCC BAA-125 / DSM 18197 / FERM 7344 / JCM 9153 / C-125) (Bacillus halodurans).